The primary structure comprises 493 residues: Dipeptide permease D (493 aa).

Transmembrane regions (helical) follow at residues 14–34 (VVALQIWEYFSFYGMRALLIL), 49–69 (ELFSAYCSLVYVTPILGGYLA), 91–111 (LVLGASEIAPTFLYLSLAIIV), 138–158 (GGFSLLYAAGNIGSIVAPIAC), 167–187 (WAMGFALAAIGMLAGLVIFLC), 212–232 (NWGWLLILLVAAPLLITVLFW), 235–255 (WSVYALIVATAISLVVLAKIY), 267–287 (LGLIVTLTLFSMLFWAFAQQG), 312–332 (MFQSVNAFAVMLCGVVLAWLV), 344–364 (IWGKFALGLGLMSAGFCILTL), 379–399 (LMVLGLAVMGFAELFIDPVAM), 413–433 (VLTGIYMLLSGAIANYLAGVI), and 458–478 (VFEQITWGALACVGVVLLIWL).

This sequence belongs to the major facilitator superfamily. Proton-dependent oligopeptide transporter (POT/PTR) (TC 2.A.17) family. DtpD subfamily.

Its subcellular location is the cell inner membrane. In terms of biological role, probable proton-dependent permease that transports dipeptides. This Salmonella choleraesuis (strain SC-B67) protein is Dipeptide permease D.